The sequence spans 199 residues: SCO2-like protein RBE_0029 (199 aa).

Belongs to the SCO1/2 family.

The chain is SCO2-like protein RBE_0029 from Rickettsia bellii (strain RML369-C).